A 303-amino-acid chain; its full sequence is Methyltransferase ktnA (303 aa).

Belongs to the class I-like SAM-binding methyltransferase superfamily. It depends on S-adenosyl-L-methionine as a cofactor.

Functionally, non-reducing polyketide synthase; part of the gene cluster that mediates the biosynthesis of the bicoumarin kotanin. The non-reducing polyketide synthase ktnS first catalyzes the formation of the pentaketidic 4,7-dihydroxy-5-methylcoumarin from acetyl coenzyme A and 4 malonyl coenzyme A molecules. Further O-methylation by ktnB leads to the formation of 7-demethylsiderin. Then, an oxidative phenol coupling catalyzed by the cytochrome P450 monooxygenase ktnC forms the 8,8'-dimer P-orlandin via dimerization the monomeric precursor, 7-demethylsiderin. P-orlandin is subsequently O-methylated in a stepwise fashion to demethylkotanin and kotanin. The function of ktnA within the pathway has not been determined yet. This chain is Methyltransferase ktnA, found in Aspergillus niger (strain ATCC MYA-4892 / CBS 513.88 / FGSC A1513).